Here is a 637-residue protein sequence, read N- to C-terminus: Chaperone protein HtpG (637 aa).

The segment at methionine 1–arginine 345 is a; substrate-binding. Positions glutamate 346–lysine 562 are b. The interval leucine 563–lysine 637 is c.

Belongs to the heat shock protein 90 family. Homodimer.

Its subcellular location is the cytoplasm. Its function is as follows. Molecular chaperone. Has ATPase activity. The protein is Chaperone protein HtpG of Shewanella baltica (strain OS155 / ATCC BAA-1091).